Reading from the N-terminus, the 487-residue chain is Betaine aldehyde dehydrogenase (487 aa).

Serine 26 and aspartate 93 together coordinate K(+). 150–152 (GAW) contributes to the NAD(+) binding site. The active-site Charge relay system is lysine 162. Residues 176-179 (KPSE) and 229-232 (SVPT) each bind NAD(+). A K(+)-binding site is contributed by leucine 244. The active-site Proton acceptor is the glutamate 250. NAD(+) contacts are provided by glycine 252, cysteine 284, and glutamate 384. Residue cysteine 284 is the Nucleophile of the active site. Position 284 is a cysteine sulfenic acid (-SOH) (cysteine 284). Residues lysine 454 and glycine 457 each contribute to the K(+) site. Glutamate 461 (charge relay system) is an active-site residue.

This sequence belongs to the aldehyde dehydrogenase family. In terms of assembly, dimer of dimers. K(+) is required as a cofactor.

The catalysed reaction is betaine aldehyde + NAD(+) + H2O = glycine betaine + NADH + 2 H(+). It functions in the pathway amine and polyamine biosynthesis; betaine biosynthesis via choline pathway; betaine from betaine aldehyde: step 1/1. Involved in the biosynthesis of the osmoprotectant glycine betaine. Catalyzes the irreversible oxidation of betaine aldehyde to the corresponding acid. The chain is Betaine aldehyde dehydrogenase from Rhizobium etli (strain CIAT 652).